Consider the following 1244-residue polypeptide: Structural polyprotein (1244 aa).

Residues 1–113 (MNSVFYNPFG…GKRQRTALKF (113 aa)) form a disordered region. A compositionally biased stretch (polar residues) spans 35–44 (GLTTQIQQLT). The interval 35 to 69 (GLTTQIQQLTRAVRALVLDNATRRQRPAPRTRPRK) is host transcription inhibition. Residues 57 to 81 (RRQRPAPRTRPRKPKTQKPKPKKQN) show a composition bias toward basic residues. The Nuclear localization signal signature appears at 62–103 (APRTRPRKPKTQKPKPKKQNQKPPQQQKKGKNQPQQPKKPKP). The segment covering 82 to 97 (QKPPQQQKKGKNQPQQ) has biased composition (low complexity). The interval 85–118 (PQQQKKGKNQPQQPKKPKPGKRQRTALKFEADRT) is binding to the viral RNA. The segment covering 99–109 (KKPKPGKRQRT) has biased composition (basic residues). The segment at 103-117 (PGKRQRTALKFEADR) is ribosome-binding. Residues 117–267 (RTFVGKNEDG…KTTHEDTVEW (151 aa)) enclose the Peptidase S3 domain. The active-site Charge relay system is the histidine 144. The Nuclear export signal motif lies at 149 to 159 (IDHPALAKLKF). The segment at 160–165 (TKSSSY) is interaction with spike glycoprotein E2. The Charge relay system role is filled by aspartate 166. The tract at residues 188-198 (PEVFYNWHHGA) is dimerization of the capsid protein. The active-site Charge relay system is serine 218. A dimerization of the capsid protein region spans residues 224–228 (DNSGK). Positions 252–256 (KKGAA) are interaction with spike glycoprotein E2. Residues 268-280 (SRAITAMCILQNV) form a functions as an uncleaved signal peptide for the precursor of protein E3/E2 region. Topologically, residues 268-696 (SRAITAMCIL…HYYHLYPFYT (429 aa)) are extracellular. Asparagine 279 carries N-linked (GlcNAc...) asparagine; by host glycosylation. 4 disulfide bridges follow: cysteine 284–cysteine 290, cysteine 481–cysteine 595, cysteine 530–cysteine 555, and cysteine 532–cysteine 549. An N-linked (GlcNAc...) asparagine; by host glycan is attached at asparagine 525. An N-linked (GlcNAc...) asparagine; by host glycan is attached at asparagine 647. The chain crosses the membrane as a helical span at residues 697–717 (VTVLSGMGLAICAGLVISILC). The Cytoplasmic segment spans residues 718 to 751 (CCKARRDCLTPYQLAPNATVPFLVTLCCCFQRTS). The interaction with the capsid protein stretch occupies residues 720–724 (KARRD). S-palmitoyl cysteine; by host attachment occurs at residues cysteine 725, cysteine 745, and cysteine 746. Cysteine 725 and cysteine 746 are oxidised to a cystine. The Extracellular portion of the chain corresponds to 752 to 764 (ADEFTDTMGYLWQ). Helical transmembrane passes span 765-785 (HSQT…ITLV) and 786-805 (RCCS…NKAD). Residues 806 to 1218 (AYEHTITVPN…KTSWNWITAL (413 aa)) lie on the Extracellular side of the membrane. Disulfide bonds link cysteine 855-cysteine 920, cysteine 868-cysteine 900, cysteine 869-cysteine 902, and cysteine 874-cysteine 884. Positions 890 to 907 (VYPFLWGGAQCFCDSENS) are E1 fusion peptide loop. Residues asparagine 945 and asparagine 1051 are each glycosylated (N-linked (GlcNAc...) asparagine; by host). 4 cysteine pairs are disulfide-bonded: cysteine 1065-cysteine 1077, cysteine 1106-cysteine 1181, cysteine 1111-cysteine 1185, and cysteine 1133-cysteine 1175. The helical transmembrane segment at 1219 to 1239 (MGGISSIAAIAAIVLVIALVF) threads the bilayer. At 1240 to 1244 (TAQHR) the chain is on the cytoplasmic side.

Homodimer. Homomultimer. Interacts with host karyopherin KPNA4; this interaction allows the nuclear import of the viral capsid protein. Interacts with spike glycoprotein E2. Interacts with host IRAK1; the interaction leads to inhibition of IRAK1-dependent signaling. As to quaternary structure, the precursor of protein E3/E2 and E1 form a heterodimer shortly after synthesis. In terms of assembly, the precursor of protein E3/E2 and E1 form a heterodimer shortly after synthesis. Processing of the precursor of protein E3/E2 into E2 and E3 results in a heterodimer of the spike glycoproteins E2 and E1. Spike at virion surface are constituted of a trimer of E2-E1 heterodimers. After target cell attachment and endocytosis, E1 change conformation to form homotrimers. Interacts with 6K protein. Interacts with spike glycoprotein E1. Processing of the precursor of protein E3/E2 into E2 and E3 results in a heterodimer of the spike glycoproteins E2 and E1. Spike at virion surface are constituted of a trimer of E2-E1 heterodimers. Interacts with 6K protein. As to quaternary structure, oligomer. Interacts with spike glycoprotein E1. Interacts with spike glycoprotein E2. Structural polyprotein: Specific enzymatic cleavages in vivo yield mature proteins. Capsid protein is auto-cleaved during polyprotein translation, unmasking a signal peptide at the N-terminus of the precursor of E3/E2. The remaining polyprotein is then targeted to the host endoplasmic reticulum, where host signal peptidase cleaves it into pE2, 6K and E1 proteins. pE2 is further processed to mature E3 and E2 by host furin in trans-Golgi vesicle. Post-translationally, palmitoylated via thioester bonds. These palmitoylations may induce disruption of the C-terminus transmembrane. This would result in the reorientation of E2 C-terminus from lumenal to cytoplasmic side. In terms of processing, N-glycosylated. Palmitoylated via thioester bonds.

It is found in the virion. It localises to the host cytoplasm. The protein resides in the host cell membrane. The protein localises to the host nucleus. Its subcellular location is the virion membrane. It is found in the host Golgi apparatus. It localises to the host trans-Golgi network. The protein resides in the host endoplasmic reticulum. The enzyme catalyses Autocatalytic release of the core protein from the N-terminus of the togavirus structural polyprotein by hydrolysis of a -Trp-|-Ser- bond.. In terms of biological role, forms an icosahedral capsid with a T=4 symmetry composed of 240 copies of the capsid protein surrounded by a lipid membrane through which penetrate 80 spikes composed of trimers of E1-E2 heterodimers. The capsid protein binds to the viral RNA genome at a site adjacent to a ribosome binding site for viral genome translation following genome release. Possesses a protease activity that results in its autocatalytic cleavage from the nascent structural protein. Following its self-cleavage, the capsid protein transiently associates with ribosomes, and within several minutes the protein binds to viral RNA and rapidly assembles into icosahedric core particles. The resulting nucleocapsid eventually associates with the cytoplasmic domain of the spike glycoprotein E2 at the cell membrane, leading to budding and formation of mature virions. In case of infection, new virions attach to target cells and after clathrin-mediated endocytosis their membrane fuses with the host endosomal membrane. This leads to the release of the nucleocapsid into the cytoplasm, followed by an uncoating event necessary for the genomic RNA to become accessible. The uncoating might be triggered by the interaction of capsid proteins with ribosomes. Binding of ribosomes would release the genomic RNA since the same region is genomic RNA-binding and ribosome-binding. Specifically inhibits interleukin-1 receptor-associated kinase 1/IRAK1-dependent signaling during viral entry, representing a means by which the alphaviruses may evade innate immune detection and activation prior to viral gene expression. Provides the signal sequence for the translocation of the precursor of protein E3/E2 to the host endoplasmic reticulum. Furin-cleaved E3 remains associated with spike glycoprotein E1 and mediates pH protection of the latter during the transport via the secretory pathway. After virion release from the host cell, the assembly protein E3 is gradually released in the extracellular space. Its function is as follows. Plays a role in viral attachment to target host cell, by binding to the cell receptor. Synthesized as a p62 precursor which is processed by furin at the cell membrane just before virion budding, giving rise to E2-E1 heterodimer. The p62-E1 heterodimer is stable, whereas E2-E1 is unstable and dissociate at low pH. p62 is processed at the last step, presumably to avoid E1 fusion activation before its final export to cell surface. E2 C-terminus contains a transitory transmembrane that would be disrupted by palmitoylation, resulting in reorientation of the C-terminal tail from lumenal to cytoplasmic side. This step is critical since E2 C-terminus is involved in budding by interacting with capsid proteins. This release of E2 C-terminus in cytoplasm occurs lately in protein export, and precludes premature assembly of particles at the endoplasmic reticulum membrane. Functionally, acts as a viroporin that participates in virus glycoprotein processing and transport to the plasma membrane, cell permeabilization and budding of viral particles. Disrupts the calcium homeostasis of the cell, probably at the endoplasmic reticulum level. This leads to cytoplasmic calcium elevation. Because of its lipophilic properties, the 6K protein is postulated to influence the selection of lipids that interact with the transmembrane domains of the glycoproteins, which, in turn, affects the deformability of the bilayer required for the extreme curvature that occurs as budding proceeds. Present in low amount in virions, about 3% compared to viral glycoproteins. In terms of biological role, class II viral fusion protein. Fusion activity is inactive as long as E1 is bound to E2 in mature virion. After virus attachment to target cell and endocytosis, acidification of the endosome induce dissociation of E1/E2 heterodimer and concomitant trimerization of the E1 subunits. This E1 trimer is fusion active, and promotes release of viral nucleocapsid in cytoplasm after endosome and viral membrane fusion. Efficient fusion requires the presence of cholesterol and sphingolipid in the target membrane. This chain is Structural polyprotein, found in Aedes (AURAV).